The chain runs to 211 residues: Claudin-13 (211 aa).

Residues 1 to 8 (MVVSKQEA) are Cytoplasmic-facing. Residues 9 to 29 (ISFSVTSLGWVGAIVSCVLPV) form a helical membrane-spanning segment. The Extracellular segment spans residues 30-80 (WRVTFPDDETDPDATIWEGLWHICQVRENRWIQCTLYDTRILVAQDIKVSR). A helical transmembrane segment spans residues 81-101 (VFMVICTIGTWLGLLLCVLGD). Residues 102 to 118 (WRINCFMNFTIEENLLK) lie on the Cytoplasmic side of the membrane. A helical transmembrane segment spans residues 119–139 (VAGGMFLSVGLLMLVPLSWVT). Residues 140 to 165 (HNIIHGFFNPLLGFSKKVQMGSSLSL) are Extracellular-facing. Residues 166-186 (AWTSSLLLLLGGILLCVNIPV) traverse the membrane as a helical segment. Over 187–211 (CRDFPRCIETPSARPSGANNDTLDV) the chain is Cytoplasmic.

It belongs to the claudin family.

The protein resides in the cell junction. It localises to the tight junction. Its subcellular location is the cell membrane. Functionally, plays a major role in tight junction-specific obliteration of the intercellular space, through calcium-independent cell-adhesion activity. This Mus musculus (Mouse) protein is Claudin-13 (Cldn13).